The sequence spans 104 residues: Urease subunit beta (104 aa).

Belongs to the urease beta subunit family. As to quaternary structure, heterotrimer of UreA (gamma), UreB (beta) and UreC (alpha) subunits. Three heterotrimers associate to form the active enzyme.

Its subcellular location is the cytoplasm. The enzyme catalyses urea + 2 H2O + H(+) = hydrogencarbonate + 2 NH4(+). It functions in the pathway nitrogen metabolism; urea degradation; CO(2) and NH(3) from urea (urease route): step 1/1. This chain is Urease subunit beta, found in Rhodopseudomonas palustris (strain BisB5).